We begin with the raw amino-acid sequence, 206 residues long: Musculin (206 aa).

The disordered stretch occupies residues 1 to 115 (MSTGSVSDPE…QSQRNAANAR (115 aa)). A compositionally biased stretch (acidic residues) spans 46–56 (SAEEEDPDGEE). Positions 71-76 (KRKRPR) match the Nuclear localization signal motif. Residues 78–92 (AGGGGAGGSAGGGGK) show a composition bias toward gly residues. Residues 93 to 102 (KPLPAKGSAA) show a composition bias toward low complexity. The 53-residue stretch at 107-159 (SQRNAANARERARMRVLSKAFSRLKTSLPWVPPDTKLSKLDTLRLASSYIAHL) folds into the bHLH domain.

In terms of assembly, efficient DNA binding requires dimerization with another bHLH protein. Binds DNA as a homodimer or a heterodimer. Forms a heterodimer with TCF3. In terms of tissue distribution, expressed in lymphoid tissues, B-cell lines and activated B-cells.

It localises to the nucleus. Functionally, transcription repressor capable of inhibiting the transactivation capability of TCF3/E47. May play a role in regulating antigen-dependent B-cell differentiation. The polypeptide is Musculin (MSC) (Homo sapiens (Human)).